The primary structure comprises 431 residues: O-phosphoseryl-tRNA(Sec) selenium transferase (431 aa).

Residues 1 to 36 form a tetramerization region; sequence MRGLIPDHMLERGRTVLDSYREPVERLLSERRMPEE. Position 67 (R67) interacts with pyridoxal 5'-phosphate. The interval 88–98 is phosphate loop (P-loop); the sequence is GRSGTLVDPQP. Substrate contacts are provided by R89, S90, and Q97. The residue at position 269 (K269) is an N6-(pyridoxal phosphate)lysine. R298 lines the substrate pocket.

It belongs to the SepSecS family. As to quaternary structure, homotetramer. Pyridoxal 5'-phosphate serves as cofactor.

The catalysed reaction is O-phospho-L-seryl-tRNA(Sec) + selenophosphate + H2O = L-selenocysteinyl-tRNA(Sec) + 2 phosphate. It functions in the pathway aminoacyl-tRNA biosynthesis; selenocysteinyl-tRNA(Sec) biosynthesis; selenocysteinyl-tRNA(Sec) from L-seryl-tRNA(Sec) (archaeal/eukaryal route): step 2/2. Its function is as follows. Converts O-phosphoseryl-tRNA(Sec) to selenocysteinyl-tRNA(Sec) required for selenoprotein biosynthesis. The sequence is that of O-phosphoseryl-tRNA(Sec) selenium transferase (spcS) from Methanopyrus kandleri (strain AV19 / DSM 6324 / JCM 9639 / NBRC 100938).